A 143-amino-acid chain; its full sequence is MAPKKKVTGLIKLQIQAGAANPAPPIGPALGQHGVNIMEFCKAYNAATESQRGNVIPVEITVYEDRSFTFITKTPPAAELIKKAAGVAKGSATPHTVKVAKLTQAQVEEIASTKMEDLNANDIKAAALIIAGTARSMGITVEG.

The protein belongs to the universal ribosomal protein uL11 family. Part of the ribosomal stalk of the 50S ribosomal subunit. Interacts with L10 and the large rRNA to form the base of the stalk. L10 forms an elongated spine to which L12 dimers bind in a sequential fashion forming a multimeric L10(L12)X complex. In terms of processing, one or more lysine residues are methylated.

Functionally, forms part of the ribosomal stalk which helps the ribosome interact with GTP-bound translation factors. The polypeptide is Large ribosomal subunit protein uL11 (Paenarthrobacter aurescens (strain TC1)).